The following is a 1306-amino-acid chain: DNA-directed RNA polymerase subunit beta' (1306 aa).

The Zn(2+) site is built by Cys-214, Cys-285, Cys-292, and Cys-295. 2 disordered regions span residues 1234 to 1263 (LDNG…PNRL) and 1281 to 1306 (IARA…DDDK). Residues 1247–1259 (QGERDNNNSDKKP) are compositionally biased toward basic and acidic residues.

This sequence belongs to the RNA polymerase beta' chain family. RpoC2 subfamily. In cyanobacteria the RNAP catalytic core is composed of 2 alpha, 1 beta, 1 beta', 1 gamma and 1 omega subunit. When a sigma factor is associated with the core the holoenzyme is formed, which can initiate transcription. Zn(2+) is required as a cofactor.

The catalysed reaction is RNA(n) + a ribonucleoside 5'-triphosphate = RNA(n+1) + diphosphate. DNA-dependent RNA polymerase catalyzes the transcription of DNA into RNA using the four ribonucleoside triphosphates as substrates. The sequence is that of DNA-directed RNA polymerase subunit beta' from Crocosphaera subtropica (strain ATCC 51142 / BH68) (Cyanothece sp. (strain ATCC 51142)).